The following is a 433-amino-acid chain: CinA-like protein (433 aa).

This sequence belongs to the CinA family.

The chain is CinA-like protein from Frankia casuarinae (strain DSM 45818 / CECT 9043 / HFP020203 / CcI3).